Reading from the N-terminus, the 441-residue chain is Growth/differentiation factor 9 (441 aa).

The signal sequence occupies residues 1–29; that stretch reads MALPSNFLLGVCCFAWLCFLSSLSSQAST. A propeptide spanning residues 30-306 is cleaved from the precursor; that stretch reads EESQSGASEN…EVERSPRRRR (277 aa). 4 N-linked (GlcNAc...) asparagine glycosylation sites follow: asparagine 163, asparagine 229, asparagine 258, and asparagine 325. Disulfide bonds link cysteine 340/cysteine 406, cysteine 369/cysteine 438, and cysteine 373/cysteine 440.

Belongs to the TGF-beta family. Homodimer or heterodimer (Potential). But, in contrast to other members of this family, cannot be disulfide-linked. Post-translationally, phosphorylated; phosphorylation is critical for GDF9 function. In terms of tissue distribution, ovary. Strongly expressed in germinal vesicle (GV) stage oocytes, MII-stage oocytes and in zygotes.

Its subcellular location is the secreted. Functionally, required for ovarian folliculogenesis. The chain is Growth/differentiation factor 9 (Gdf9) from Mus musculus (Mouse).